Consider the following 82-residue polypeptide: Host translation inhibitor 5b (82 aa).

In terms of biological role, involved in host translation shutoff without degradating host RNA. By suppressing host gene expression, facilitates the evasion from host type I interferon immune response. This chain is Host translation inhibitor 5b, found in Gallus gallus (Chicken).